Consider the following 505-residue polypeptide: Mannosyl-oligosaccharide alpha-1,2-mannosidase 1B (505 aa).

An N-terminal signal peptide occupies residues 1–16 (MRTLLALAALAGFAAA). 2 N-linked (GlcNAc...) asparagine glycosylation sites follow: asparagine 88 and asparagine 174. A disulfide bond links cysteine 325 and cysteine 354. Asparagine 359 carries N-linked (GlcNAc...) asparagine glycosylation. Glutamate 368 serves as the catalytic Proton donor. Residue threonine 494 participates in Ca(2+) binding.

This sequence belongs to the glycosyl hydrolase 47 family. Monomer. It depends on Ca(2+) as a cofactor. The cofactor is Mg(2+).

The protein localises to the cytoplasmic vesicle lumen. The enzyme catalyses N(4)-(alpha-D-Man-(1-&gt;2)-alpha-D-Man-(1-&gt;2)-alpha-D-Man-(1-&gt;3)-[alpha-D-Man-(1-&gt;2)-alpha-D-Man-(1-&gt;3)-[alpha-D-Man-(1-&gt;2)-alpha-D-Man-(1-&gt;6)]-alpha-D-Man-(1-&gt;6)]-beta-D-Man-(1-&gt;4)-beta-D-GlcNAc-(1-&gt;4)-beta-D-GlcNAc)-L-asparaginyl-[protein] (N-glucan mannose isomer 9A1,2,3B1,2,3) + 4 H2O = N(4)-(alpha-D-Man-(1-&gt;3)-[alpha-D-Man-(1-&gt;3)-[alpha-D-Man-(1-&gt;6)]-alpha-D-Man-(1-&gt;6)]-beta-D-Man-(1-&gt;4)-beta-D-GlcNAc-(1-&gt;4)-beta-D-GlcNAc)-L-asparaginyl-[protein] (N-glucan mannose isomer 5A1,2) + 4 beta-D-mannose. It carries out the reaction N(4)-(alpha-D-Man-(1-&gt;2)-alpha-D-Man-(1-&gt;2)-alpha-D-Man-(1-&gt;3)-[alpha-D-Man-(1-&gt;3)-[alpha-D-Man-(1-&gt;2)-alpha-D-Man-(1-&gt;6)]-alpha-D-Man-(1-&gt;6)]-beta-D-Man-(1-&gt;4)-beta-D-GlcNAc-(1-&gt;4)-beta-D-GlcNAc)-L-asparaginyl-[protein] (N-glucan mannose isomer 8A1,2,3B1,3) + 3 H2O = N(4)-(alpha-D-Man-(1-&gt;3)-[alpha-D-Man-(1-&gt;3)-[alpha-D-Man-(1-&gt;6)]-alpha-D-Man-(1-&gt;6)]-beta-D-Man-(1-&gt;4)-beta-D-GlcNAc-(1-&gt;4)-beta-D-GlcNAc)-L-asparaginyl-[protein] (N-glucan mannose isomer 5A1,2) + 3 beta-D-mannose. It participates in protein modification; protein glycosylation. Functionally, involved in the maturation of Asn-linked oligosaccharides. Progressively trims alpha-1,2-linked mannose residues from Man(9)GlcNAc(2) to produce Man(5)GlcNAc(2). The sequence is that of Mannosyl-oligosaccharide alpha-1,2-mannosidase 1B (mns1B) from Emericella nidulans (strain FGSC A4 / ATCC 38163 / CBS 112.46 / NRRL 194 / M139) (Aspergillus nidulans).